We begin with the raw amino-acid sequence, 638 residues long: Chaperone protein DnaK (638 aa).

Threonine 198 carries the phosphothreonine; by autocatalysis modification. The interval 602-638 (QAKSQAQGGEEAQAKDAGQSNDDVVDAEFEEVKDDKK) is disordered. Residues 624–638 (DVVDAEFEEVKDDKK) are compositionally biased toward acidic residues.

It belongs to the heat shock protein 70 family.

In terms of biological role, acts as a chaperone. The chain is Chaperone protein DnaK from Shewanella denitrificans (strain OS217 / ATCC BAA-1090 / DSM 15013).